A 364-amino-acid polypeptide reads, in one-letter code: Aminomethyltransferase (364 aa).

The protein belongs to the GcvT family. In terms of assembly, the glycine cleavage system is composed of four proteins: P, T, L and H.

The catalysed reaction is N(6)-[(R)-S(8)-aminomethyldihydrolipoyl]-L-lysyl-[protein] + (6S)-5,6,7,8-tetrahydrofolate = N(6)-[(R)-dihydrolipoyl]-L-lysyl-[protein] + (6R)-5,10-methylene-5,6,7,8-tetrahydrofolate + NH4(+). The glycine cleavage system catalyzes the degradation of glycine. The sequence is that of Aminomethyltransferase from Citrobacter koseri (strain ATCC BAA-895 / CDC 4225-83 / SGSC4696).